The primary structure comprises 211 residues: RING finger protein narya (211 aa).

Residues 6–47 form an RING-type zinc finger; sequence CNKCFRHRKTDPAVPFHLTQCRHVICGPCLGQSSLEKNCPLC. The disordered stretch occupies residues 149-211; sequence RRRHSAGERF…FGSDTKGFRL (63 aa). Positions 153-165 are enriched in basic and acidic residues; it reads SAGERFHTPEFKE. Positions 172–184 are enriched in low complexity; the sequence is STSDKSPSDMPSD.

In terms of assembly, may interact with itself, with nenya and vilya through its RING-type zinc finger. As to expression, expressed in nurse cell and pro-oocytes (at protein level).

The protein resides in the chromosome. Functionally, required for the formation of DNA double-strand breaks (DSBs) together with nenya and vilya during the meiotic recombination process. Plays a role in DSBs processing into crossovers. Plays a redundant role with nenya in chromosome segregation during female meiosis. In Drosophila melanogaster (Fruit fly), this protein is RING finger protein narya.